The sequence spans 256 residues: Acetylglutamate kinase (256 aa).

Substrate-binding positions include 40–41, arginine 62, and asparagine 154; that span reads GG.

The protein belongs to the acetylglutamate kinase family. ArgB subfamily.

It is found in the cytoplasm. It carries out the reaction N-acetyl-L-glutamate + ATP = N-acetyl-L-glutamyl 5-phosphate + ADP. The protein operates within amino-acid biosynthesis; L-arginine biosynthesis; N(2)-acetyl-L-ornithine from L-glutamate: step 2/4. Catalyzes the ATP-dependent phosphorylation of N-acetyl-L-glutamate. This is Acetylglutamate kinase from Staphylococcus aureus (strain MRSA252).